The primary structure comprises 220 residues: uncharacterized protein (220 aa).

Belongs to the DadA oxidoreductase family. It depends on FAD as a cofactor.

This is an uncharacterized protein from Halorhodospira halophila (Ectothiorhodospira halophila).